Reading from the N-terminus, the 402-residue chain is B box and SPRY domain-containing protein (402 aa).

The disordered stretch occupies residues 1 to 20 (MSAEGAEPGPGSGSGPGPGP). Residues 17 to 65 (GPGPLCPEHGQALSWFCGSERRPVCAACAGLGGRCRGHRIRRAEERAEE) form a B box-type zinc finger. One can recognise a B30.2/SPRY domain in the interval 212–402 (PLLTQLWATA…VADQTISIVR (191 aa)).

Interacts with TRPV5 and TRPV6. Interacts with YWHAZ/14-3-3 protein zeta.

Its subcellular location is the cytoplasm. The protein localises to the membrane. Its function is as follows. May regulate epithelial calcium transport by inhibiting TRPV5 activity. This Homo sapiens (Human) protein is B box and SPRY domain-containing protein (BSPRY).